The sequence spans 691 residues: Ribonucleoprotein PTB-binding 2 (691 aa).

Over residues 1–30 (MAAAAGDGGGEGGAGLGSAAGLGPGPGLRG) the composition is skewed to gly residues. A disordered region spans residues 1-47 (MAAAAGDGGGEGGAGLGSAAGLGPGPGLRGQGPSAEAHEGAPDPMPA). Alanine 2 is subject to N-acetylalanine. 3 consecutive RRM domains span residues 69–140 (RKIL…LQPT), 142–220 (ALLC…WMDV), and 231–309 (KCLC…FCAP). Disordered stretches follow at residues 492–522 (PNQH…EGNF) and 543–574 (GHHK…GEPP). A compositionally biased stretch (polar residues) spans 548–569 (QQSQPKGTEISSGAASKNQTSL).

Interacts with PTBP1 and RAVER1.

Its subcellular location is the nucleus. It is found in the cytoplasm. May bind single-stranded nucleic acids. The protein is Ribonucleoprotein PTB-binding 2 (RAVER2) of Homo sapiens (Human).